We begin with the raw amino-acid sequence, 292 residues long: MKNLTGIFSALLVAFNEDGSINEQGLRQIIRHNIDKMKVDGLYVGGSTGENFMLSTAEKKEIFRIAKDEAKDQIALIAQVGSVNLQEAVELGKYATELGYDCLSAVTPFYYKFSFAEIKHYYDTIIAETGNNMIVYSIPFLTGVNIGVEQFGELYKNPKILGVKFTAGDFYLLERLKKAYPNHLIWAGFDEMMLPAVALGVDGAIGSTFNVNTPRARQIFELTKQGKLAEALAVQHVTNDLIEGILANGLYLTIKELLKLQGVEAGYCREPMTAKATDKQLEVAKALYAKFL.

Aceneuramate-binding residues include S47 and T48. Y136 acts as the Proton donor in catalysis. K164 serves as the catalytic Schiff-base intermediate with substrate. Positions 166, 188, 190, 191, and 207 each coordinate aceneuramate.

It belongs to the DapA family. NanA subfamily. Homotetramer.

It localises to the cytoplasm. The enzyme catalyses aceneuramate = aldehydo-N-acetyl-D-mannosamine + pyruvate. The protein operates within amino-sugar metabolism; N-acetylneuraminate degradation; D-fructose 6-phosphate from N-acetylneuraminate: step 1/5. Its function is as follows. Catalyzes the reversible aldol cleavage of N-acetylneuraminic acid (sialic acid; Neu5Ac) to form pyruvate and N-acetylmannosamine (ManNAc) via a Schiff base intermediate. The polypeptide is N-acetylneuraminate lyase (Actinobacillus pleuropneumoniae serotype 3 (strain JL03)).